The sequence spans 324 residues: Probable tRNA pseudouridine synthase B (324 aa).

The active-site Nucleophile is aspartate 72. Residues 239 to 314 (LPRVVILDSA…LVIETRKVFM (76 aa)) enclose the PUA domain.

This sequence belongs to the pseudouridine synthase TruB family. Type 2 subfamily.

It carries out the reaction uridine(55) in tRNA = pseudouridine(55) in tRNA. Could be responsible for synthesis of pseudouridine from uracil-55 in the psi GC loop of transfer RNAs. The polypeptide is Probable tRNA pseudouridine synthase B (Methanothermobacter thermautotrophicus (strain ATCC 29096 / DSM 1053 / JCM 10044 / NBRC 100330 / Delta H) (Methanobacterium thermoautotrophicum)).